We begin with the raw amino-acid sequence, 250 residues long: Protein BTG4 (250 aa).

The protein belongs to the BTG family. In terms of assembly, interacts with CNOT7 and EIF4E. Interacts with CNOT8. In terms of tissue distribution, expressed in oocytes. Expressed in testis and in olfactory epithelium.

In terms of biological role, adapter protein that bridges CNOT7, a catalytic subunit of the CCR4-NOT complex, to EIF4E, and facilitates maternal mRNAs decay during the maturation of oocytes and in the fertilized egg. It is therefore required for the maternal-zygotic transition (MZT), zygotic cleavage and initiation of embryonic development. This chain is Protein BTG4 (Btg4), found in Mus musculus (Mouse).